We begin with the raw amino-acid sequence, 204 residues long: MIGRLRGAVAEIGEEEALIDVMGVGYVVRCGSRTLQRLPALGEEALLHIESQWSESAGLRLYGFGTREDRRAFVLLQAIQGVGPKAAMAVLDVLSPAELASAVAREDKAAVGRASGVGPKLALRIVTELKDKPITDGPVLMTAPGAVAAAPAKAAPTGDAVAALMGLGVAEVNARRVVEAAAAKLGDEATVQALIKAGLQELGR.

A domain I region spans residues 1-65 (MIGRLRGAVA…SAGLRLYGFG (65 aa)). The domain II stretch occupies residues 66 to 142 (TREDRRAFVL…PITDGPVLMT (77 aa)). The segment at 143-152 (APGAVAAAPA) is flexible linker. The tract at residues 152–204 (AKAAPTGDAVAALMGLGVAEVNARRVVEAAAAKLGDEATVQALIKAGLQELGR) is domain III.

This sequence belongs to the RuvA family. In terms of assembly, homotetramer. Forms an RuvA(8)-RuvB(12)-Holliday junction (HJ) complex. HJ DNA is sandwiched between 2 RuvA tetramers; dsDNA enters through RuvA and exits via RuvB. An RuvB hexamer assembles on each DNA strand where it exits the tetramer. Each RuvB hexamer is contacted by two RuvA subunits (via domain III) on 2 adjacent RuvB subunits; this complex drives branch migration. In the full resolvosome a probable DNA-RuvA(4)-RuvB(12)-RuvC(2) complex forms which resolves the HJ.

The protein resides in the cytoplasm. Its function is as follows. The RuvA-RuvB-RuvC complex processes Holliday junction (HJ) DNA during genetic recombination and DNA repair, while the RuvA-RuvB complex plays an important role in the rescue of blocked DNA replication forks via replication fork reversal (RFR). RuvA specifically binds to HJ cruciform DNA, conferring on it an open structure. The RuvB hexamer acts as an ATP-dependent pump, pulling dsDNA into and through the RuvAB complex. HJ branch migration allows RuvC to scan DNA until it finds its consensus sequence, where it cleaves and resolves the cruciform DNA. The chain is Holliday junction branch migration complex subunit RuvA from Caulobacter sp. (strain K31).